The sequence spans 177 residues: Late embryogenesis abundant protein 1 (177 aa).

The interval methionine 1–histidine 177 is disordered. The segment covering isoleucine 28–alanine 39 has biased composition (basic and acidic residues). Residues glutamine 40–alanine 89 are compositionally biased toward low complexity. 4 tandem repeats follow at residues threonine 53 to glutamine 63, threonine 64 to glutamine 74, threonine 75 to glutamine 85, and threonine 86 to glutamine 96. Positions threonine 53–glutamine 96 are 4 X 11 AA approximate tandem repeats of T-A-Q-A-A-K-E-K-T-Q-Q. Basic and acidic residues predominate over residues alanine 90–serine 117. The segment covering methionine 119 to glycine 142 has biased composition (polar residues). Basic and acidic residues predominate over residues asparagine 164–histidine 177.

It belongs to the LEA type 4 family. As to expression, highest expression is found in seeds. No expression detected in adult tissues.

The sequence is that of Late embryogenesis abundant protein 1 from Cicer arietinum (Chickpea).